The following is a 622-amino-acid chain: Gamma tubulin complex adapter SPC72 (622 aa).

Disordered regions lie at residues 1-58 (MVRR…PALM) and 221-263 (DKEE…IHDS). Positions 228 to 238 (LAQSSPAGSQL) are enriched in polar residues. A compositionally biased stretch (basic and acidic residues) spans 239–250 (ESRDSPSSKEEN).

Homooligomer. Interacts with CDC5, KAR1, KIN4, SPC97, SPC98, STU2 and TUB4. Post-translationally, phosphorylated by CDC5.

The protein localises to the cytoplasm. It is found in the cytoskeleton. Its subcellular location is the microtubule organizing center. It localises to the spindle pole body. Spindle pole body (SPB) component that acts as the gamma-tubulin complex-binding protein of the SPB outer plaque. Anchors cytoplasmic microtubules at the half bridge of the spindle pole body (SPB) and accordingly functions in nuclear position and spindle orientation, including anaphase spindle migration into the bud. Recruits KIN4 kinase to both SPBs when cytoplasmic microtubules are defective, to delay mitotic exit. Links cytoplasmic microtubules with spindle orientation checkpoint (SPOC) components and, therefore, could function as part of the sensors of spindle orientation defects. Required for cytoplasmic astral microtubule growth during mitosis. Is strictly required for mating and karyogamy. The chain is Gamma tubulin complex adapter SPC72 (SPC72) from Saccharomyces cerevisiae (strain ATCC 204508 / S288c) (Baker's yeast).